The following is a 514-amino-acid chain: Cardiolipin synthase 2 (514 aa).

3 helical membrane-spanning segments follow: residues 7–27, 41–61, and 71–91; these read LIFF…FIDV, ILGI…CVIF, and LTWL…YLLF. PLD phosphodiesterase domains are found at residues 249–276 and 427–454; these read INYR…GDEY and EKGF…DMRS. Residues His254, Lys256, Asp261, His432, Lys434, and Asp439 contribute to the active site.

It belongs to the phospholipase D family. Cardiolipin synthase subfamily.

It localises to the cell membrane. The catalysed reaction is 2 a 1,2-diacyl-sn-glycero-3-phospho-(1'-sn-glycerol) = a cardiolipin + glycerol. Catalyzes the reversible phosphatidyl group transfer from one phosphatidylglycerol molecule to another to form cardiolipin (CL) (diphosphatidylglycerol) and glycerol. The protein is Cardiolipin synthase 2 (cls2) of Bacillus anthracis.